The sequence spans 160 residues: Transcription elongation factor GreA 2 (160 aa).

A coiled-coil region spans residues 9–73; the sequence is MTEEGKVKLE…RIKTVEHMLQ (65 aa).

The protein belongs to the GreA/GreB family.

Functionally, necessary for efficient RNA polymerase transcription elongation past template-encoded arresting sites. The arresting sites in DNA have the property of trapping a certain fraction of elongating RNA polymerases that pass through, resulting in locked ternary complexes. Cleavage of the nascent transcript by cleavage factors such as GreA or GreB allows the resumption of elongation from the new 3'terminus. GreA releases sequences of 2 to 3 nucleotides. The chain is Transcription elongation factor GreA 2 from Lactiplantibacillus plantarum (strain ATCC BAA-793 / NCIMB 8826 / WCFS1) (Lactobacillus plantarum).